A 629-amino-acid polypeptide reads, in one-letter code: tRNA uridine 5-carboxymethylaminomethyl modification enzyme MnmG (629 aa).

13–18 (GGGHAG) provides a ligand contact to FAD. 273–287 (GPRYCPSIEDKITRF) is a binding site for NAD(+).

It belongs to the MnmG family. In terms of assembly, homodimer. Heterotetramer of two MnmE and two MnmG subunits. The cofactor is FAD.

It localises to the cytoplasm. In terms of biological role, NAD-binding protein involved in the addition of a carboxymethylaminomethyl (cmnm) group at the wobble position (U34) of certain tRNAs, forming tRNA-cmnm(5)s(2)U34. This is tRNA uridine 5-carboxymethylaminomethyl modification enzyme MnmG from Aeromonas salmonicida (strain A449).